The following is a 909-amino-acid chain: ABC transporter B family member 1 (909 aa).

The disordered stretch occupies residues 1 to 36 (MTKKNFNDEENESLLETYNKQQQKQSISTTNRSDQK). Polar residues predominate over residues 14-36 (LLETYNKQQQKQSISTTNRSDQK). A helical transmembrane segment spans residues 85–105 (LFIQIVSLVILAGYLISINAL). Positions 125–134 (TDSGSVSPTS) are enriched in low complexity. The segment at 125 to 147 (TDSGSVSPTSTPSPTPTPTPSPT) is disordered. The segment covering 135–145 (TPSPTPTPTPS) has biased composition (pro residues). The next 8 helical transmembrane spans lie at 182–202 (FSTF…LLLI), 206–226 (SFIY…YNVI), 275–295 (IIIV…VLHI), 347–367 (LPII…SLAM), 392–412 (LALV…SWLF), 480–500 (VILL…IVPV), 572–592 (GVFS…IVYV), and 607–627 (LTSF…ISSL). In terms of domain architecture, ABC transmembrane type-1 spans 350–633 (ILAAMVALVF…ISSLMTDFLK (284 aa)). The ABC transporter domain occupies 666–902 (IELKDVEFSY…TDGIYHNLVK (237 aa)). 701-708 (GPSGGGKS) contributes to the ATP binding site.

This sequence belongs to the ABC transporter superfamily. ABCB family.

The protein localises to the membrane. This chain is ABC transporter B family member 1 (abcB1), found in Dictyostelium discoideum (Social amoeba).